Consider the following 145-residue polypeptide: UPF0201 protein STK_09490 (145 aa).

This sequence belongs to the UPF0201 family.

This is UPF0201 protein STK_09490 from Sulfurisphaera tokodaii (strain DSM 16993 / JCM 10545 / NBRC 100140 / 7) (Sulfolobus tokodaii).